The primary structure comprises 340 residues: Deubiquitinase SseL (340 aa).

The active site involves His-222. Cys-284 functions as the Nucleophile in the catalytic mechanism.

It belongs to the peptidase C79 family.

The protein resides in the secreted. The protein localises to the host cytoplasm. Its function is as follows. Effector proteins function to alter host cell physiology and promote bacterial survival in host tissues. This protease targets the host cell ubiquitin pathway by acting as a deubiquitinase in infected host cells. In Salmonella arizonae (strain ATCC BAA-731 / CDC346-86 / RSK2980), this protein is Deubiquitinase SseL (sseL).